The following is a 566-amino-acid chain: MAPLLAAAMNHAAAHPGLRSHLVGPNNESFSRHHLPSSSPQSSKRRCNLSFTTRSARVGSQNGVQMLSPSEIPQRDWFPSDFTFGAATSAYQIEGAWNEDGKGESNWDHFCHNHPERILDGSNSDIGANSYHMYKTDVRLLKEMGMDAYRFSISWPRILPKGTKEGGINPDGIKYYRNLINLLLENGIEPYVTIFHWDVPQALEEKYGGFLDKSHKSIVEDYTYFAKVCFDNFGDKVKNWLTFNEPQTFTSFSYGTGVFAPGRCSPGLDCAYPTGNSLVEPYTAGHNILLAHAEAVDLYNKHYKRDDTRIGLAFDVMGRVPYGTSFLDKQAEERSWDINLGWFLEPVVRGDYPFSMRSLARERLPFFKDEQKEKLAGSYNMLGLNYYTSRFSKNIDISPNYSPVLNTDDAYASQEVNGPDGKPIGPPMGNPWIYMYPEGLKDLLMIMKNKYGNPPIYITENGIGDVDTKETPLPMEAALNDYKRLDYIQRHIATLKESIDLGSNVQGYFAWSLLDNFEWFAGFTERYGIVYVDRNNNCTRYMKESAKWLKEFNTAKKPSKKILTPA.

A chloroplast-targeting transit peptide spans 1 to 54; sequence MAPLLAAAMNHAAAHPGLRSHLVGPNNESFSRHHLPSSSPQSSKRRCNLSFTTR. Residues 17 to 47 form a disordered region; that stretch reads GLRSHLVGPNNESFSRHHLPSSSPQSSKRRC. Residues glutamine 92, histidine 196, and 244 to 245 contribute to the a beta-D-glucoside site; that span reads NE. The active-site Proton donor is the glutamate 245. Cysteine 264 and cysteine 270 are disulfide-bonded. The tract at residues 325–361 is dimerization; it reads SFLDKQAEERSWDINLGWFLEPVVRGDYPFSMRSLAR. An a beta-D-glucoside-binding site is contributed by tyrosine 387. Dimerization stretches follow at residues 394–405 and 450–453; these read NIDISPNYSPVL and KYGN. A beta-D-glucoside contacts are provided by residues glutamate 460, tryptophan 511, 518-519, and tyrosine 527; that span reads EW. The Nucleophile role is filled by glutamate 460.

Belongs to the glycosyl hydrolase 1 family. In terms of assembly, homo- and heterodimer. Expressed in all seedling parts. Most abundant in the coleoptile.

It localises to the plastid. Its subcellular location is the chloroplast. It catalyses the reaction Hydrolysis of terminal, non-reducing beta-D-glucosyl residues with release of beta-D-glucose.. The enzyme catalyses DIMBOA beta-D-glucoside + H2O = DIMBOA + D-glucose. It carries out the reaction DIBOA beta-D-glucoside + H2O = DIBOA + D-glucose. Reversibly inhibited by micromolar concentrations of Hg(2+) or Ag(+), but irreversibly inhibited by alkylation in presence of urea. Competitive inhibition by p-nitrophenyl beta-D-thioglucoside (pNPTGlc), glucotetrazole, and para-hydroxy-S-mandelonitrile beta-glucoside (dhurrin). Is implicated in many functions such as ABA metabolism, hydrolysis of conjugated gibberellins, conversion of storage forms of cytokinins to active forms. Also acts in defense of young plant parts against pests via the production of hydroxamic acids from hydroxamic acid glucosides. Enzymatic activity is highly correlated with plant growth. The preferred substrate is DIMBOA-beta-D-glucoside. Hydrolyzes the chromogenic substrate 6-bromo-2-naphthyl-beta-D-glucoside (6BNGlc) and various artificial aryl beta-glucosides. No activity with cellobiose, arbutin, gentiobiose, linamarin or dhurrin as substrates. The polypeptide is 4-hydroxy-7-methoxy-3-oxo-3,4-dihydro-2H-1,4-benzoxazin-2-yl glucoside beta-D-glucosidase 1, chloroplastic (GLU1) (Zea mays (Maize)).